We begin with the raw amino-acid sequence, 231 residues long: MIIQKGKEHLAKDKQKSNLYLRILSGIVLVPSFVVAILWLKPLFYVLMILVAIGMLSEWYDMTHSSIMYLLIGLIIIPIPISLLIFLSSNPINNWLIMLYFCIVWSVDIFAMIGGKTLGGAKLAPKISPKKTWSGLITGILSAGLVATLISFIPSFYIENYYFSNRIYLFIISCTLALTAQLSDLFISYFKRKFNIKDSGNIIPGHGGVLDRFDSIILTAPILFFINGLYL.

A run of 6 helical transmembrane segments spans residues Phe-33 to Ile-53, Ile-67 to Leu-87, Trp-95 to Gly-115, Trp-133 to Ile-153, Ile-167 to Ile-187, and His-206 to Ile-226.

This sequence belongs to the CDS family.

Its subcellular location is the cell membrane. The catalysed reaction is a 1,2-diacyl-sn-glycero-3-phosphate + CTP + H(+) = a CDP-1,2-diacyl-sn-glycerol + diphosphate. It functions in the pathway phospholipid metabolism; CDP-diacylglycerol biosynthesis; CDP-diacylglycerol from sn-glycerol 3-phosphate: step 3/3. The polypeptide is Phosphatidate cytidylyltransferase (cdsA) (Rickettsia bellii (strain RML369-C)).